The primary structure comprises 872 residues: uncharacterized protein (872 aa).

Residues 496 to 524 (LQQHHQDISAMQQQILEEKNQLRRATIDV) adopt a coiled-coil conformation. Disordered stretches follow at residues 595-736 (RPAV…SVQQ) and 844-872 (TKENISVNPRDASKAPKSRFQRTKPPQAV). Polar residues-rich tracts occupy residues 615–659 (QNGN…QTTF) and 670–686 (PYASRATSNGLSPNNVV). The segment covering 687–736 (QQYQSYYDNPSNQQSNQQSNQQSNQQPNQQPNQQPNQQPNQQPNQQSVQQ) has biased composition (low complexity).

It is found in the virion. This is an uncharacterized protein from Acanthamoeba polyphaga mimivirus (APMV).